Here is a 328-residue protein sequence, read N- to C-terminus: Aspartate carbamoyltransferase catalytic subunit (328 aa).

Arg64 and Thr65 together coordinate carbamoyl phosphate. Residue Lys92 participates in L-aspartate binding. Arg114, His144, and Gln147 together coordinate carbamoyl phosphate. L-aspartate-binding residues include Arg177 and Arg232. Residues Gly273 and Pro274 each coordinate carbamoyl phosphate.

The protein belongs to the aspartate/ornithine carbamoyltransferase superfamily. ATCase family. As to quaternary structure, heterododecamer (2C3:3R2) of six catalytic PyrB chains organized as two trimers (C3), and six regulatory PyrI chains organized as three dimers (R2).

It carries out the reaction carbamoyl phosphate + L-aspartate = N-carbamoyl-L-aspartate + phosphate + H(+). It participates in pyrimidine metabolism; UMP biosynthesis via de novo pathway; (S)-dihydroorotate from bicarbonate: step 2/3. Its function is as follows. Catalyzes the condensation of carbamoyl phosphate and aspartate to form carbamoyl aspartate and inorganic phosphate, the committed step in the de novo pyrimidine nucleotide biosynthesis pathway. This Halorhodospira halophila (strain DSM 244 / SL1) (Ectothiorhodospira halophila (strain DSM 244 / SL1)) protein is Aspartate carbamoyltransferase catalytic subunit.